We begin with the raw amino-acid sequence, 266 residues long: MSQQSRLANTFATARAEHRAALIGYLPAGYPDLAGSIATCRAMVESGCDIVEVGVAYSDPVMDGPTIQAAAEQALRGGVRVRDVFSVVEAITAAGGQAVVMSYWNPVLRYGVERFARDLAAAGGAGIITPNLIPEEADDWFIASATHNLDRIFLVAPSSTEERLVKTLEASRGFIYAASTMGVTGARDAVSSAAPALCARIRAHSDIPIGVGLGVRNGAQAAEIASYADGVIVGSALVSAAGEGLDAVRALTSELAEGVRSATVAS.

Active-site proton acceptor residues include glutamate 52 and aspartate 63.

It belongs to the TrpA family. In terms of assembly, tetramer of two alpha and two beta chains.

The enzyme catalyses (1S,2R)-1-C-(indol-3-yl)glycerol 3-phosphate + L-serine = D-glyceraldehyde 3-phosphate + L-tryptophan + H2O. The protein operates within amino-acid biosynthesis; L-tryptophan biosynthesis; L-tryptophan from chorismate: step 5/5. Functionally, the alpha subunit is responsible for the aldol cleavage of indoleglycerol phosphate to indole and glyceraldehyde 3-phosphate. The protein is Tryptophan synthase alpha chain of Nocardia farcinica (strain IFM 10152).